Reading from the N-terminus, the 296-residue chain is Pantothenate synthetase (296 aa).

30 to 37 (MGNLHEGH) is an ATP binding site. Histidine 37 (proton donor) is an active-site residue. Position 61 (glutamine 61) interacts with (R)-pantoate. Glutamine 61 is a binding site for beta-alanine. An ATP-binding site is contributed by 149–152 (GEKD). Glutamine 155 lines the (R)-pantoate pocket. ATP-binding positions include valine 178 and 186 to 189 (MSSR).

It belongs to the pantothenate synthetase family. Homodimer.

It is found in the cytoplasm. It catalyses the reaction (R)-pantoate + beta-alanine + ATP = (R)-pantothenate + AMP + diphosphate + H(+). The protein operates within cofactor biosynthesis; (R)-pantothenate biosynthesis; (R)-pantothenate from (R)-pantoate and beta-alanine: step 1/1. In terms of biological role, catalyzes the condensation of pantoate with beta-alanine in an ATP-dependent reaction via a pantoyl-adenylate intermediate. The chain is Pantothenate synthetase from Vibrio atlanticus (strain LGP32) (Vibrio splendidus (strain Mel32)).